The chain runs to 414 residues: Glutamyl-tRNA reductase (414 aa).

Residues 49-52 (TCNR), Ser108, 113-115 (EPQ), and Gln119 each bind substrate. Catalysis depends on Cys50, which acts as the Nucleophile. 188-193 (GAGQTG) serves as a coordination point for NADP(+).

This sequence belongs to the glutamyl-tRNA reductase family. In terms of assembly, homodimer.

The enzyme catalyses (S)-4-amino-5-oxopentanoate + tRNA(Glu) + NADP(+) = L-glutamyl-tRNA(Glu) + NADPH + H(+). Its pathway is porphyrin-containing compound metabolism; protoporphyrin-IX biosynthesis; 5-aminolevulinate from L-glutamyl-tRNA(Glu): step 1/2. Catalyzes the NADPH-dependent reduction of glutamyl-tRNA(Glu) to glutamate 1-semialdehyde (GSA). The chain is Glutamyl-tRNA reductase from Francisella philomiragia subsp. philomiragia (strain ATCC 25017 / CCUG 19701 / FSC 153 / O#319-036).